Consider the following 686-residue polypeptide: UvrABC system protein C (686 aa).

Over residues 1 to 14 (MVHDSTDDPDDTRV) the composition is skewed to basic and acidic residues. Positions 1–48 (MVHDSTDDPDDTRVRKSRRGTALDAPPQETAPPDLDPATTGGDDEDDA) are disordered. Residues 81–160 (TSPGVYRMLN…IKQLRPRFNV (80 aa)) enclose the GIY-YIG domain. A UVR domain is found at 270–305 (HAVKQELAGEMEKAANELEFETAALYRDRLAALSAI).

This sequence belongs to the UvrC family. In terms of assembly, interacts with UvrB in an incision complex.

It is found in the cytoplasm. Its function is as follows. The UvrABC repair system catalyzes the recognition and processing of DNA lesions. UvrC both incises the 5' and 3' sides of the lesion. The N-terminal half is responsible for the 3' incision and the C-terminal half is responsible for the 5' incision. The chain is UvrABC system protein C from Bradyrhizobium diazoefficiens (strain JCM 10833 / BCRC 13528 / IAM 13628 / NBRC 14792 / USDA 110).